The chain runs to 467 residues: MTCRTRFAPSPTGYLHIGGARTALYCWLEARHRGGEFVLRIEDTDRERSTQGAIDAILEAMEWLGLDYDEGPIYQTDRVARYLEVAEQLVADGKAYYAYETREELDAMREAAMAKQEKPRYNGAARELGLPRKDDPNRVIRFKNPLQGTVVFDDLIKGRIEIANSELDDMVIFRPDGFPTYNFAVVVDDWDMGITEVIRGDDHINNTPRQINLYEGIGAPVPKFGHMPMILDEQGAKLSKRTGAADVMQYKDAGYLPDALLSYLARLGWSHGDQELFSRQELIELFDVKDCNSKASRLDMAKLGWVNQHFLKTEDVAAIVPHLVYQLQKLGLDVAAGPAPEDVVIALRERVQTLKEMAEKAVVWYQPLTEYDEAAVAKHFKAGAEVALGKARELLAALPEWTAEAVGVALHDTAAALEMGMGKVAQPLRVAITGTQVSPDISHTVYLAGRDQALKRIDVAITKVATA.

Residues 9–19 (PSPTGYLHIGG) carry the 'HIGH' region motif. The 'KMSKS' region signature appears at 237–241 (KLSKR). Lys240 is a binding site for ATP.

This sequence belongs to the class-I aminoacyl-tRNA synthetase family. Glutamate--tRNA ligase type 1 subfamily. As to quaternary structure, monomer.

It is found in the cytoplasm. The catalysed reaction is tRNA(Glu) + L-glutamate + ATP = L-glutamyl-tRNA(Glu) + AMP + diphosphate. Its function is as follows. Catalyzes the attachment of glutamate to tRNA(Glu) in a two-step reaction: glutamate is first activated by ATP to form Glu-AMP and then transferred to the acceptor end of tRNA(Glu). The protein is Glutamate--tRNA ligase of Stenotrophomonas maltophilia (strain R551-3).